The chain runs to 104 residues: MNFRPLHDRVVVKRIDAEEKTAGGIIIPDTAKEKPSQGEIVAVGPGGRDEAGKLIPIDLKVGDRVLFGKWSGTEVKIDGKELLIMKESDIMGVITDVGAKKKAA.

It belongs to the GroES chaperonin family. In terms of assembly, heptamer of 7 subunits arranged in a ring. Interacts with the chaperonin GroEL.

It localises to the cytoplasm. Functionally, together with the chaperonin GroEL, plays an essential role in assisting protein folding. The GroEL-GroES system forms a nano-cage that allows encapsulation of the non-native substrate proteins and provides a physical environment optimized to promote and accelerate protein folding. GroES binds to the apical surface of the GroEL ring, thereby capping the opening of the GroEL channel. This chain is Co-chaperonin GroES 2, found in Rhodopseudomonas palustris (strain ATCC BAA-98 / CGA009).